The chain runs to 278 residues: Shikimate dehydrogenase (NADP(+)) (278 aa).

Shikimate contacts are provided by residues 18-20 (SRS) and threonine 65. The active-site Proton acceptor is the lysine 69. An NADP(+)-binding site is contributed by glutamate 80. Shikimate-binding residues include asparagine 89 and aspartate 104. NADP(+) is bound by residues 129-133 (GAGGS) and leucine 218. Tyrosine 220 contacts shikimate. Glycine 241 is a binding site for NADP(+).

The protein belongs to the shikimate dehydrogenase family. As to quaternary structure, homodimer.

The catalysed reaction is shikimate + NADP(+) = 3-dehydroshikimate + NADPH + H(+). It functions in the pathway metabolic intermediate biosynthesis; chorismate biosynthesis; chorismate from D-erythrose 4-phosphate and phosphoenolpyruvate: step 4/7. Functionally, involved in the biosynthesis of the chorismate, which leads to the biosynthesis of aromatic amino acids. Catalyzes the reversible NADPH linked reduction of 3-dehydroshikimate (DHSA) to yield shikimate (SA). This is Shikimate dehydrogenase (NADP(+)) from Rhodopseudomonas palustris (strain ATCC BAA-98 / CGA009).